The chain runs to 385 residues: MAARVLMAPRRLKPFNRLQVILQHLKTCKHTDSAADVLLQKQGGAGIITLNRPKVLNALSFKMIQQIYPQIKAWEQDPETFLIIIKGTGEKAFCAGGDVRAIADAGKAGDTMTRDYFREEYRLDNAIGTCKKPYVALIDGITMGGGVGLSVHGHFRVATEKTVFAMPETAIGLFPDVGGGYFLPRLSGKIGHLLALTGFRLKGRDVLKAGIATHFVESGKLPELEKDLIALKSPSKENIADLLNSYHMQTKIDQEKEFVLDEHMERINSIFSANSMEEIVQKLKQDGSPFATKQLEAINKMSPTSLKLTLRQLREGATMSLQDVFTMEYRLSQACMRGHDFYEGVRAVLIDKDQSPRWKPAALEEVSDEFVDNCFKPLGNNDLKL.

Substrate-binding residues include E120, G145, E168, and D176.

Belongs to the enoyl-CoA hydratase/isomerase family.

It localises to the mitochondrion. It catalyses the reaction 3-hydroxy-2-methylpropanoyl-CoA + H2O = 3-hydroxy-2-methylpropanoate + CoA + H(+). Its pathway is amino-acid degradation; L-valine degradation. Functionally, hydrolyzes 3-hydroxyisobutyryl-CoA (HIBYL-CoA), a saline catabolite. Has high activity toward isobutyryl-CoA. Could be an isobutyryl-CoA dehydrogenase that functions in valine catabolism. Also hydrolyzes 3-hydroxypropanoyl-CoA. The sequence is that of 3-hydroxyisobutyryl-CoA hydrolase, mitochondrial (HIBCH) from Gallus gallus (Chicken).